Reading from the N-terminus, the 573-residue chain is Proline--tRNA ligase (573 aa).

This sequence belongs to the class-II aminoacyl-tRNA synthetase family. ProS type 1 subfamily. Homodimer.

It is found in the cytoplasm. It carries out the reaction tRNA(Pro) + L-proline + ATP = L-prolyl-tRNA(Pro) + AMP + diphosphate. Functionally, catalyzes the attachment of proline to tRNA(Pro) in a two-step reaction: proline is first activated by ATP to form Pro-AMP and then transferred to the acceptor end of tRNA(Pro). As ProRS can inadvertently accommodate and process non-cognate amino acids such as alanine and cysteine, to avoid such errors it has two additional distinct editing activities against alanine. One activity is designated as 'pretransfer' editing and involves the tRNA(Pro)-independent hydrolysis of activated Ala-AMP. The other activity is designated 'posttransfer' editing and involves deacylation of mischarged Ala-tRNA(Pro). The misacylated Cys-tRNA(Pro) is not edited by ProRS. The chain is Proline--tRNA ligase from Moorella thermoacetica (strain ATCC 39073 / JCM 9320).